The following is a 724-amino-acid chain: Coiled-coil domain-containing protein 175 (724 aa).

Coiled-coil stretches lie at residues Val131–Leu164, Ile203–Thr256, Val282–Lys373, Glu426–Leu534, and Gln565–Glu627.

In Bos taurus (Bovine), this protein is Coiled-coil domain-containing protein 175 (CCDC175).